Reading from the N-terminus, the 892-residue chain is MTDVTLKALAAERQVSVDRLVQQFADAGIRKSADDSVSAQEKQTLLAHLNREAVSGPDKLTLQRKTRSTLNIPGTGGKSKSVQIEVRKKRIFVKRDPQEAERLAAEEQAQREAEEQARREAEEQAKREAQQKAEREAAEQAKREAAEKAKREAAEKDKVSNQQTDDMTKTAQAEKARRENEAAELKRKAEEEARRKLEEEARRVAEEARRMAEENKWTATPEPVEDTSDYHVTTSQHARQAEDENDREVEGGRGRGRNAKAARPAKKGKHAESKADREEARAAVRGGKGGKRKGSSLQQGFQKPAQAVNRDVVIGETITVGELANKMAVKGSQVIKAMMKLGAMATINQVIDQETAQLVAEEMGHKVILRRENELEEAVMSDRDTGAAAEPRAPVVTIMGHVDHGKTSLLDYIRSTKVASGEAGGITQHIGAYHVETDNGMITFLDTPGHAAFTSMRARGAQATDIVVLVVAADDGVMPQTIEAIQHAKAAGVPVVVAVNKIDKPEADPDRVKNELSQYGILPEEWGGESQFVHVSAKAGTGIDELLDAILLQAEVLELKAVRKGMASGAVIESFLDKGRGPVATVLVREGTLHKGDIVLCGFEYGRVRAMRNELGQEVLEAGPSIPVEILGLSGVPAAGDEVTVVRDEKKAREVALYRQGKFREVKLARQQKSKLENMFANMTEGEVHEVNIVLKADVQGSVEAISDSLLKLSTDEVKVKIIGSGVGGITETDATLAAASNAILVGFNVRADASARKVIESESLDLRYYSVIYNLIDEVKAAMSGMLSPELKQQIIGLAEVRDVFKSPKFGAIAGCMVTEGTIKRHNPIRVLRDNVVIYEGELESLRRFKDDVNEVRNGMECGIGVKNYNDVRVGDMIEVFEIIEIQRTIA.

Composition is skewed to basic and acidic residues over residues 93–159 (VKRD…KDKV) and 166–216 (DMTK…EENK). The tract at residues 93-304 (VKRDPQEAER…SSLQQGFQKP (212 aa)) is disordered. Positions 254–269 (GRGRNAKAARPAKKGK) are enriched in basic residues. Basic and acidic residues predominate over residues 270–282 (HAESKADREEARA). The tr-type G domain maps to 391–560 (PRAPVVTIMG…LLQAEVLELK (170 aa)). The G1 stretch occupies residues 400 to 407 (GHVDHGKT). GTP is bound at residue 400–407 (GHVDHGKT). The tract at residues 425–429 (GITQH) is G2. Residues 446-449 (DTPG) are G3. GTP contacts are provided by residues 446–450 (DTPGH) and 500–503 (NKID). Residues 500–503 (NKID) form a G4 region. Residues 536 to 538 (SAK) are G5.

Belongs to the TRAFAC class translation factor GTPase superfamily. Classic translation factor GTPase family. IF-2 subfamily.

The protein localises to the cytoplasm. In terms of biological role, one of the essential components for the initiation of protein synthesis. Protects formylmethionyl-tRNA from spontaneous hydrolysis and promotes its binding to the 30S ribosomal subunits. Also involved in the hydrolysis of GTP during the formation of the 70S ribosomal complex. The protein is Translation initiation factor IF-2 of Salmonella gallinarum (strain 287/91 / NCTC 13346).